Reading from the N-terminus, the 110-residue chain is MRIFGPTGCRSLREDDPSLLSNAVYVIELALRMSPVPVSVQRKEHSDAEALYQQIRQALENGQPRLMELTCEKVEGKKVTLLVSEVLAVQLYEKAAAAGGSKRPGFSFDS.

It belongs to the UPF0367 family.

This Synechococcus sp. (strain CC9605) protein is UPF0367 protein Syncc9605_2376.